The chain runs to 369 residues: Beta-1,4-galactosyltransferase 2 (369 aa).

Residues 1 to 15 are Cytoplasmic-facing; that stretch reads MSRLLGGTLERVCKA. The helical; Signal-anchor for type II membrane protein transmembrane segment at 16–36 threads the bilayer; that stretch reads VLLLCLLHFLVAVILYFDVYA. Residues 37–369 are Lumenal-facing; sequence QHLAFFSRFS…GRPMSWLNQG (333 aa). The span at 59 to 75 shows a compositional bias: polar residues; that stretch reads SSSTNCSRPNATASSSG. A disordered region spans residues 59–90; that stretch reads SSSTNCSRPNATASSSGLPEVPSARPGPTAPV. 2 N-linked (GlcNAc...) asparagine glycosylation sites follow: N63 and N68. A disulfide bond links C94 and C136. UDP-alpha-D-galactose-binding positions include 147–151, 186–188, 214–215, and W275; these read PFRHR, FNR, and VD. A disulfide bond links C208 and C227. Residue D215 participates in Mn(2+) binding. Position 277–280 (277–280) interacts with N-acetyl-D-glucosamine; it reads GEDD. H308 provides a ligand contact to Mn(2+). 308–310 lines the UDP-alpha-D-galactose pocket; it reads HDR. R320 contributes to the N-acetyl-D-glucosamine binding site. A glycan (N-linked (GlcNAc...) asparagine) is linked at N354.

Belongs to the glycosyltransferase 7 family. Mn(2+) is required as a cofactor.

It localises to the golgi apparatus. Its subcellular location is the golgi stack membrane. It catalyses the reaction D-glucose + UDP-alpha-D-galactose = lactose + UDP + H(+). It carries out the reaction an N-acetyl-beta-D-glucosaminyl derivative + UDP-alpha-D-galactose = a beta-D-galactosyl-(1-&gt;4)-N-acetyl-beta-D-glucosaminyl derivative + UDP + H(+). The catalysed reaction is N-acetyl-D-glucosamine + UDP-alpha-D-galactose = beta-D-galactosyl-(1-&gt;4)-N-acetyl-D-glucosamine + UDP + H(+). It functions in the pathway protein modification; protein glycosylation. Its function is as follows. Responsible for the synthesis of complex-type N-linked oligosaccharides in many glycoproteins as well as the carbohydrate moieties of glycolipids. Can produce lactose. The protein is Beta-1,4-galactosyltransferase 2 (B4GALT2) of Cricetulus griseus (Chinese hamster).